A 249-amino-acid chain; its full sequence is Small ribosomal subunit protein uS2 (249 aa).

It belongs to the universal ribosomal protein uS2 family.

The protein is Small ribosomal subunit protein uS2 of Polynucleobacter necessarius subsp. necessarius (strain STIR1).